A 159-amino-acid chain; its full sequence is MVDPARARKLAKRIGTIVATAIDHEIKDPRLAFVTITDTKVTNDLHDATVYYTVMGEKVDSAPDVEAAAAGLEKAKGVLRSKVGAGTGVRFTPTLTFVADTVPDTARHMEELLARAKAADDEVAKARENAQPAGDADPYKEPRVASDEDEASPDVREAD.

Basic and acidic residues-rich tracts occupy residues 118–128 and 137–146; these read AADDEVAKARE and DPYKEPRVAS. The disordered stretch occupies residues 118 to 159; that stretch reads AADDEVAKARENAQPAGDADPYKEPRVASDEDEASPDVREAD.

Belongs to the RbfA family. In terms of assembly, monomer. Binds 30S ribosomal subunits, but not 50S ribosomal subunits or 70S ribosomes.

It is found in the cytoplasm. Functionally, one of several proteins that assist in the late maturation steps of the functional core of the 30S ribosomal subunit. Associates with free 30S ribosomal subunits (but not with 30S subunits that are part of 70S ribosomes or polysomes). Required for efficient processing of 16S rRNA. May interact with the 5'-terminal helix region of 16S rRNA. The protein is Ribosome-binding factor A of Rhodococcus erythropolis (strain PR4 / NBRC 100887).